Here is a 570-residue protein sequence, read N- to C-terminus: MSNKDLLPIALGKEKADLVFKNGKIIDVFNEKVIEEDLAISNGVIIGFGKYEGKEEVDLEGKFISPGFIDAHLHLESAMVTIEEFAKTVIPLGTLTLVADPHEIANVAGKVGIKYFLTIGNNIPWNFNLMVPSCVPVTTFDKSGSVLNAEKIKELITEENFFGLGEVMDYEGVITGQDYIWDKIELMKDYFIDGHAPKLQGKILNAYLLAGIMADHETTSPNEALEKISKGMYIMVREGSVTRDLQSLLPAINDKNNCNFLFATDDKHPEDLISEGHINFMIKKAIKLGMEPFRAIKLATLNAARSLGLHRLGGIAPGYKADLLIIDNLDELGIFQVYKDGKKVAENGKALFQVNSNNFERPPTIFHSVNIAPIREEDFKIPKGKTYRVINMIQDQIITGEDFFSFPDSFEEERFIRYNINKIAVVERHKSTGKIGLGLIRGFGLESGAIASSIAHDSHNIIVLGTNSCDMKIAVEKIAEIQGGIVIANNQKIVDFIELPIGGLISTDPIGKVSEKLQELRKIVHNLGVKTNSPFMTLAFMGLPVVPKLKITCDGLYDVENHIFVSLVVN.

It belongs to the metallo-dependent hydrolases superfamily. Adenine deaminase family. The cofactor is Mn(2+).

The enzyme catalyses adenine + H2O + H(+) = hypoxanthine + NH4(+). This Petrotoga mobilis (strain DSM 10674 / SJ95) protein is Adenine deaminase.